An 812-amino-acid polypeptide reads, in one-letter code: Axin-2 (812 aa).

The segment at 1–43 is disordered; it reads MNRTLTDPMVSSFREDDPRPPVPGEEGETTCHHPSKLAMMRPK. Residues 84-203 form the RGS domain; that stretch reads SLHFLLGDQD…LTSDIYLEYV (120 aa). Disordered stretches follow at residues 275–326, 388–430, 446–484, and 609–726; these read SYRR…AIPP, ETMS…TCEE, TPGC…SSMN, and RQTK…SGCH. The span at 285 to 303 shows a compositional bias: polar residues; that stretch reads NRFTSGYSFAPATSANDSE. Over residues 305–323 the composition is skewed to low complexity; it reads SSDALTDDSMSMTDSSVDA. The tract at residues 329-415 is interaction with GSK3B; it reads LGSKKQLQRE…RDESEMSSSS (87 aa). Residues 388–397 are compositionally biased toward basic and acidic residues; sequence ETMSSLEERL. Acidic residues predominate over residues 401–410; sequence QEEEERDESE. The span at 411 to 421 shows a compositional bias: low complexity; it reads MSSSSASHSLP. The interaction with beta-catenin stretch occupies residues 415–467; it reads SASHSLPLLPPGTCEEDPQAILDEHLSRVLKTPGCQSPGLLRHSPRSRSPEQR. Residues 475-484 show a composition bias toward polar residues; the sequence is STRSQSSSMN. Residues 672-683 show a composition bias toward basic and acidic residues; sequence EEARRRLEEVSK. The region spanning 730-812 is the DIX domain; it reads GSETVVTYFF…KILGKVDRMD (83 aa).

In terms of assembly, interacts with hwa; leading to promote the tankyrase-mediated degradation of axin1. Post-translationally, ADP-ribosylated by tankyrase tnks and tnks2. Poly-ADP-ribosylated protein is recognized by rnf146, followed by ubiquitination and subsequent activation of the Wnt signaling pathway. In terms of processing, ubiquitinated by rnf146 when poly-ADP-ribosylated, leading to its degradation and subsequent activation of the Wnt signaling pathway.

It is found in the cytoplasm. Functionally, component of the beta-catenin destruction complex required for regulating ctnnb1 levels through phosphorylation and ubiquitination, and modulating Wnt-signaling. Controls dorsoventral patterning by down-regulating ctnnb1 to inhibit the Wnt signaling pathway and ventralize embryos. This is Axin-2 (axin2) from Danio rerio (Zebrafish).